A 303-amino-acid chain; its full sequence is Recombination-associated protein RdgC (303 aa).

This sequence belongs to the RdgC family.

The protein resides in the cytoplasm. It localises to the nucleoid. Functionally, may be involved in recombination. This chain is Recombination-associated protein RdgC, found in Edwardsiella ictaluri (strain 93-146).